We begin with the raw amino-acid sequence, 313 residues long: Ribonuclease HIII (313 aa).

Positions 63–85 are disordered; that stretch reads ARWGTAEPQEKKKTAKKPADPRY. A compositionally biased stretch (basic and acidic residues) spans 70-82; the sequence is PQEKKKTAKKPAD. The RNase H type-2 domain occupies 94–310; it reads MSVIGSDEVG…TQKAQRLADK (217 aa). Positions 100, 101, and 205 each coordinate a divalent metal cation.

It belongs to the RNase HII family. RnhC subfamily. In terms of assembly, interacts with the RNA polymerase core. Requires Mn(2+) as cofactor. The cofactor is Mg(2+).

It localises to the cytoplasm. The enzyme catalyses Endonucleolytic cleavage to 5'-phosphomonoester.. In terms of biological role, endonuclease that specifically degrades the RNA of RNA-DNA hybrids. This Bacillus subtilis (strain 168) protein is Ribonuclease HIII (rnhC).